Consider the following 789-residue polypeptide: Trans-4-hydroxy-L-proline dehydratase (789 aa).

Residues 7–663 (ERTKKLREES…IMGASPNGRL (657 aa)) enclose the PFL domain. The Cysteine radical intermediate role is filled by C434. E436 (proton acceptor) is an active-site residue. Residues 670 to 789 (EGISPEKGGD…EIIGRTEQTF (120 aa)) form the Glycine radical domain. A Glycine radical modification is found at G765.

This sequence belongs to the glycyl radical enzyme (GRE) family. HYPD subfamily. In terms of processing, requires the activating protein PflE to generate the key active site glycyl radical on Gly-765 that is involved in catalysis.

The enzyme catalyses trans-4-hydroxy-L-proline = (S)-1-pyrroline-5-carboxylate + H2O + H(+). Its function is as follows. Glycine radical enzyme that catalyzes the dehydration of the non-proteinogenic amino acid trans-4-hydroxy-L-proline (Hyp) to produce delta(1)-pyrroline-5-carboxylate (P5C). Is involved in the anaerobic degradation of 4-hydroxyproline. This chain is Trans-4-hydroxy-L-proline dehydratase, found in Clostridioides difficile (Peptoclostridium difficile).